The following is a 463-amino-acid chain: MRIYNTLTQQKEAFKTLEPGKVRMYVCGMTVYDYCHLGHARVLVAFDVVTRYLRHRGYDVHYVRNITDIDDKILRRADENGEVYTDLTDRMIRAMHEDEAKLGVLSPNEEPRATAFIDDIIAMIQKLIAGGHAYAADNGDVYFAVESFPDYGKLSKKKLEDLVAGARVDVQEAKRSPADFALWKAAKPGEVSWQSPWGEGRPGWHIECSAMSTKCLGDTFDIHGGGPDLLFPHHENEIAQSECATGHTFVHTWMHAGAIRVNKEKMSKSLGNFFTIREILEKYPAEVVRYFLVSSHYRSQVDYSEDNLAEAGRTLTKLYHALRGIVPAKEADVAETDHDRRFAEVMDDDFNTAGAIAVLHAVANDINHYRREGDEEAAKRSAAVLVRLGAVLGLLQQNPEAFFQADTGSELTAEDIEAMIQARADARKAKDFAEADRIRDDLLEKGIILDDSREGTTWRRSQD.

Position 27 (cysteine 27) interacts with Zn(2+). The 'HIGH' region motif lies at 29–39 (MTVYDYCHLGH). Residues cysteine 208, histidine 233, and glutamate 237 each contribute to the Zn(2+) site. Positions 265–269 (KMSKS) match the 'KMSKS' region motif. Lysine 268 is an ATP binding site.

Belongs to the class-I aminoacyl-tRNA synthetase family. Monomer. Zn(2+) is required as a cofactor.

It localises to the cytoplasm. It catalyses the reaction tRNA(Cys) + L-cysteine + ATP = L-cysteinyl-tRNA(Cys) + AMP + diphosphate. The sequence is that of Cysteine--tRNA ligase from Marinobacter nauticus (strain ATCC 700491 / DSM 11845 / VT8) (Marinobacter aquaeolei).